Here is a 155-residue protein sequence, read N- to C-terminus: RNA pyrophosphohydrolase (155 aa).

Positions 5 to 149 constitute a Nudix hydrolase domain; it reads EYRSGVGIML…KKPLYEKILS (145 aa). Positions 39-60 match the Nudix box motif; that stretch reads GGLEAKETPEVGVLRELEEETG.

Belongs to the Nudix hydrolase family. RppH subfamily. A divalent metal cation is required as a cofactor.

Accelerates the degradation of transcripts by removing pyrophosphate from the 5'-end of triphosphorylated RNA, leading to a more labile monophosphorylated state that can stimulate subsequent ribonuclease cleavage. This chain is RNA pyrophosphohydrolase, found in Zymomonas mobilis subsp. mobilis (strain ATCC 31821 / ZM4 / CP4).